The sequence spans 166 residues: KH homology domain-containing protein 1A (166 aa).

A KH; atypical domain is found at 19–78; that stretch reads PLVFDMEEDKEDYIFGPHDEYLHTLEVHSNTLIQLERWFTPTGQTRVTVVGPLKARLWVM.

It belongs to the KHDC1 family.

The protein resides in the cytoplasm. Has pro-apoptotic activity. The polypeptide is KH homology domain-containing protein 1A (Khdc1a) (Mus musculus (Mouse)).